The primary structure comprises 601 residues: Glutamine--fructose-6-phosphate aminotransferase [isomerizing] (601 aa).

Cys2 functions as the Nucleophile; for GATase activity in the catalytic mechanism. A Glutamine amidotransferase type-2 domain is found at 2–218 (CGIVGYIGYD…DHEIVIVKKD (217 aa)). SIS domains follow at residues 284-423 (IIND…EHGR) and 453-591 (IATD…VDKP). The For Fru-6P isomerization activity role is filled by Lys596.

In terms of assembly, homodimer.

The protein localises to the cytoplasm. It catalyses the reaction D-fructose 6-phosphate + L-glutamine = D-glucosamine 6-phosphate + L-glutamate. Functionally, catalyzes the first step in hexosamine metabolism, converting fructose-6P into glucosamine-6P using glutamine as a nitrogen source. This is Glutamine--fructose-6-phosphate aminotransferase [isomerizing] from Staphylococcus aureus (strain Mu50 / ATCC 700699).